A 159-amino-acid polypeptide reads, in one-letter code: MKAWGTVVVTLATLMVVTVDAKIYERCELAARLERAGLNGYKGYGVGDWLCMAHYESGFDTAFVDHNPDGSSEYGIFQLNSAWWCDNGITPTKNLCHMDCHDLLNRHILDDIRCAKQIVSSQNGLSAWTSWRLHCSGHDLSEWLKGCDMHVKIDPKIHP.

Residues 1–21 (MKAWGTVVVTLATLMVVTVDA) form the signal peptide. Residues 22-150 (KIYERCELAA…SEWLKGCDMH (129 aa)) enclose the C-type lysozyme domain. Intrachain disulfides connect C27-C147, C51-C135, C85-C100, and C96-C114. Residue E56 is part of the active site.

This sequence belongs to the glycosyl hydrolase 22 family.

The protein resides in the secreted. The enzyme catalyses Hydrolysis of (1-&gt;4)-beta-linkages between N-acetylmuramic acid and N-acetyl-D-glucosamine residues in a peptidoglycan and between N-acetyl-D-glucosamine residues in chitodextrins.. The polypeptide is Sperm acrosome-associated protein 5 (SPACA5) (Homo sapiens (Human)).